A 129-amino-acid polypeptide reads, in one-letter code: Large ribosomal subunit protein bL12 (129 aa).

This sequence belongs to the bacterial ribosomal protein bL12 family. As to quaternary structure, homodimer. Part of the ribosomal stalk of the 50S ribosomal subunit. Forms a multimeric L10(L12)X complex, where L10 forms an elongated spine to which 2 to 4 L12 dimers bind in a sequential fashion. Binds GTP-bound translation factors.

Forms part of the ribosomal stalk which helps the ribosome interact with GTP-bound translation factors. Is thus essential for accurate translation. This Pseudothermotoga lettingae (strain ATCC BAA-301 / DSM 14385 / NBRC 107922 / TMO) (Thermotoga lettingae) protein is Large ribosomal subunit protein bL12.